The chain runs to 632 residues: uncharacterized protein (632 aa).

A run of 4 helical transmembrane segments spans residues 255-275 (LFYA…ELRV), 506-526 (IALL…LTSI), 566-586 (MIFA…SMVF), and 603-623 (IVVI…AVLF).

Its subcellular location is the cell membrane. This is an uncharacterized protein from Mycoplasma pneumoniae (strain ATCC 29342 / M129 / Subtype 1) (Mycoplasmoides pneumoniae).